The sequence spans 747 residues: NAD(P)H-quinone oxidoreductase subunit 5, chloroplastic (747 aa).

16 helical membrane passes run 8 to 28 (AWIIPFVPLLVTMLIGLELLL), 39 to 59 (IWAFPAVLLLSIVMVFSTKLA), 89 to 109 (IDPLTSIMSILITTVGIMVLI), 125 to 145 (FAYMSFFNTAMLGLVTSPNLI), 147 to 167 (IHIFWELVGMCSYLLIGFWFT), 185 to 205 (GDFGLLLGILGFYLITGSFEF), 231 to 251 (AFLLFLGAVAKSAQFPLHVWL), 259 to 279 (TPISALIHAATMVAAGIFLVA), 281 to 301 (LLPLFIAIPYIMNIISLIGVI), 328 to 348 (LGYMMLALGIGSYRAALFHLI), 355 to 375 (ALLFLGSGSIIHSMEPIVGYS), 397 to 417 (TTFFLGTLSLCGIPPLACFWS), 426 to 446 (WLYSPIFAIIAFYTAGLTAFY), 550 to 570 (LFPLLILAIFTLFVGCIGIHF), 608 to 628 (FYSVSIAYFGIFLASVLYGSV), and 726 to 746 (LFLYLACVSIVLLIYYYYNFL).

Belongs to the complex I subunit 5 family. In terms of assembly, NDH is composed of at least 16 different subunits, 5 of which are encoded in the nucleus.

The protein localises to the plastid. Its subcellular location is the chloroplast thylakoid membrane. The enzyme catalyses a plastoquinone + NADH + (n+1) H(+)(in) = a plastoquinol + NAD(+) + n H(+)(out). It catalyses the reaction a plastoquinone + NADPH + (n+1) H(+)(in) = a plastoquinol + NADP(+) + n H(+)(out). NDH shuttles electrons from NAD(P)H:plastoquinone, via FMN and iron-sulfur (Fe-S) centers, to quinones in the photosynthetic chain and possibly in a chloroplast respiratory chain. The immediate electron acceptor for the enzyme in this species is believed to be plastoquinone. Couples the redox reaction to proton translocation, and thus conserves the redox energy in a proton gradient. The polypeptide is NAD(P)H-quinone oxidoreductase subunit 5, chloroplastic (ndhF) (Nymphaea alba (White water-lily)).